The chain runs to 463 residues: Myocyte-specific enhancer factor 2C (463 aa).

The 55-residue stretch at 3–57 (RKKIQITRIMDERNRQVTFTKRKFGLMKKAYELSVLCDCEIALIIFNSTNKLFQY) folds into the MADS-box domain. Lys-4 carries the N6-acetyllysine modification. Positions 58–86 (ASTDMDKVLLKYTEYNEPHESRTNSDIVE) form a DNA-binding region, mef2-type. A Phosphoserine; by CK2 modification is found at Ser-59. Ser-98 and Ser-104 each carry phosphoserine. 2 positions are modified to N6-acetyllysine: Lys-114 and Lys-117. Residues 178-223 (NSMSPGVTHRPPSAGNTGGLMGGDLTSGAGTSAGNGYGNPRNSPGL) are disordered. Phosphoserine occurs at positions 220 and 226. Lys-232 and Lys-237 each carry N6-acetyllysine. A Phosphoserine modification is found at Ser-238. N6-acetyllysine occurs at positions 250 and 262. Thr-283 and Thr-290 each carry phosphothreonine; by MAPK7 and MAPK14. The segment at 358 to 389 (ACTSTHLSQSSNLSLPSTQSLNIKSEPVSPPR) is transcription repressor. Residues 365-380 (SQSSNLSLPSTQSLNI) show a composition bias toward polar residues. The interval 365 to 463 (SQSSNLSLPS…RMRLSEGWAT (99 aa)) is disordered. Residue Lys-381 forms a Glycyl lysine isopeptide (Lys-Gly) (interchain with G-Cter in SUMO) linkage. A Phosphoserine; by CDK5 modification is found at Ser-386. At Ser-409 the chain carries Phosphoserine; by MAPK7. Low complexity predominate over residues 409–422 (SPVDSLSSCSSSYD). The segment covering 423–433 (GSDREDHRNEF) has biased composition (basic and acidic residues). Ser-435 is modified (phosphoserine).

In terms of assembly, forms a complex with class II HDACs in undifferentiating cells. On myogenic differentiation, HDACs are released into the cytoplasm allowing MEF2s to interact with other proteins for activation. Interacts with EP300 in differentiating cells; the interaction acetylates MEF2C leading to increased DNA binding and activation. Interacts with HDAC7 and CARM1. Interacts with HDAC4, HDAC7 and HDAC9; the interaction with HDACs represses transcriptional activity. Interacts with LPIN1. Interacts with MYOCD. Interacts with AKAP13. Interacts with FOXK1; the interaction inhibits MEF2C transactivation activity. Interacts (via N-terminus) with HABP4; this interaction decreases DNA-binding activity of MEF2C in myocardial cells in response to mechanical stress. Interacts with JPH2; interaction specifically takes place with the Junctophilin-2 N-terminal fragment cleavage product of JPH2. Interacts (via MADS box) with SOX18. Interacts with PHF7; the interaction promotes MEF2C binding to its transcription targets. Phosphorylated on Ser-59; which enhances DNA binding activity. Phosphorylated on Ser-386; which is required for Lys-381 sumoylation and inhibits transcriptional activity. Post-translationally, acetylated by p300 on several sites in diffentiating myocytes. Acetylation on Lys-4 increases DNA binding and transactivation. In terms of processing, sumoylated on Lys-381 with SUMO2 but not SUMO1; which represses transcriptional activity. Proteolytically cleaved in cerebellar granule neurons on several sites by caspase 3 and caspase 7 following neurotoxicity. Preferentially cleaves the CDK5-mediated hyperphosphorylated form which leads to neuron apoptosis and transcriptional inactivation.

It is found in the nucleus. Its subcellular location is the cytoplasm. It localises to the sarcoplasm. Transcription activator which binds specifically to the MEF2 element present in the regulatory regions of many muscle-specific genes. Controls cardiac morphogenesis and myogenesis, and is also involved in vascular development. Enhances transcriptional activation mediated by SOX18. Plays an essential role in hippocampal-dependent learning and memory by suppressing the number of excitatory synapses and thus regulating basal and evoked synaptic transmission. Crucial for normal neuronal development, distribution, and electrical activity in the neocortex. Necessary for proper development of megakaryocytes and platelets and for bone marrow B-lymphopoiesis. Required for B-cell survival and proliferation in response to BCR stimulation, efficient IgG1 antibody responses to T-cell-dependent antigens and for normal induction of germinal center B-cells. May also be involved in neurogenesis and in the development of cortical architecture. In Sus scrofa (Pig), this protein is Myocyte-specific enhancer factor 2C.